A 1087-amino-acid chain; its full sequence is Exportin-7 (1087 aa).

Ala2 is modified (N-acetylalanine). An Importin N-terminal domain is found at 30–96 (AEKALVEFTN…RNYVLNYLAT (67 aa)). Ser570 bears the Phosphoserine mark.

The protein belongs to the exportin family. Binds to nucleoporins. Found in a complex with XPO7, EIF4A1, ARHGAP1, VPS26A, VPS29, VPS35 and SFN. Interacts with ARHGAP1 and SFN. Interacts with Ran and cargo proteins in a GTP-dependent manner. In terms of tissue distribution, highly expressed in testis and spleen, moderate in kidney and liver and low in heart, brain, lung and skeletal muscle.

Its subcellular location is the cytoplasm. The protein localises to the nucleus. In terms of biological role, mediates the nuclear export of proteins (cargos) with broad substrate specificity. In the nucleus binds cooperatively to its cargo and to the GTPase Ran in its active GTP-bound form. Docking of this trimeric complex to the nuclear pore complex (NPC) is mediated through binding to nucleoporins. Upon transit of a nuclear export complex into the cytoplasm, disassembling of the complex and hydrolysis of Ran-GTP to Ran-GDP (induced by RANBP1 and RANGAP1, respectively) cause release of the cargo from the export receptor. XPO7 then return to the nuclear compartment and mediate another round of transport. The directionality of nuclear export is thought to be conferred by an asymmetric distribution of the GTP- and GDP-bound forms of Ran between the cytoplasm and nucleus. The protein is Exportin-7 (Xpo7) of Mus musculus (Mouse).